Here is a 746-residue protein sequence, read N- to C-terminus: Histone-lysine N-methyltransferase EZH2 (746 aa).

The segment at 1–340 (MGQTGKKSEK…AKEFAAALTA (340 aa)) is interaction with DNMT1, DNMT3A and DNMT3B. A Phosphoserine; by PKB/AKT1 modification is found at Ser21. Residues 39-68 (KTMFSSNRQKILERTETLNQEWKQRRIQPV) form an interaction with EED region. Ser75 carries O-linked (GlcNAc) serine glycosylation. Position 76 is a phosphoserine (Ser76). The disordered stretch occupies residues 180–217 (QYNDDDDDDDGDDPDEREEKQKDLEDNRDDKETCPPRK). Acidic residues predominate over residues 182–195 (NDDDDDDDGDDPDE). The segment covering 196–217 (REEKQKDLEDNRDDKETCPPRK) has biased composition (basic and acidic residues). The interaction with CDYL stretch occupies residues 329–522 (EGAKEFAAAL…SSNHVYNYQP (194 aa)). Thr339 carries the phosphothreonine modification. The interval 340 to 426 (AERIKTPPKR…PIKMKPNIEP (87 aa)) is disordered. Thr345 bears the Phosphothreonine; by CDK1 and CDK2 mark. Residues 345 to 357 (TPPKRPGGRRRGR) show a composition bias toward basic residues. Phosphoserine is present on residues Ser363 and Ser366. Thr367 is subject to Phosphothreonine. Residues 374–385 (ESKDTDSDREAG) are compositionally biased toward basic and acidic residues. Thr487 carries the phosphothreonine modification. In terms of domain architecture, CXC spans 503 to 605 (CRKIQLKKDG…SKNVSCKNCS (103 aa)). One can recognise an SET domain in the interval 612–727 (KHLLLAPSDV…TGEELFFDYR (116 aa)). Lys634 participates in a covalent cross-link: Glycyl lysine isopeptide (Lys-Gly) (interchain with G-Cter in SUMO2).

Belongs to the class V-like SAM-binding methyltransferase superfamily. Histone-lysine methyltransferase family. EZ subfamily. In terms of assembly, component of the PRC2/EED-EZH2 complex, which includes EED, EZH2, SUZ12, RBBP4 and RBBP7 and possibly AEBP2. The minimum components required for methyltransferase activity of the PRC2/EED-EZH2 complex are EED, EZH2 and SUZ12. The PRC2 complex may also interact with DNMT1, DNMT3A, DNMT3B and PHF1 via the EZH2 subunit and with SIRT1 via the SUZ12 subunit. Interacts with HDAC1 and HDAC2. Binds ATRX via the SET domain. Interacts with PRAME. Interacts with CDYL. Interacts with EED. Interacts with BMAL1. Interacts with CLOCK and CRY1. Interacts with DNMT3L; the interaction is direct. Interacts with EZHIP; the interaction blocks EZH2 methyltransferase activity. Interacts with ZNF263; recruited to the SIX3 promoter along with other proteins involved in chromatin modification and transcriptional corepression where it contributes to transcriptional repression. Interacts with ARMC12. Interacts with ZMYND8; the interaction is dependent on the presence of chromatin. Interacts with DDX18; this interaction inhibits the PRC2 complex. In terms of processing, phosphorylated by AKT1. Phosphorylation by AKT1 reduces methyltransferase activity. Phosphorylation at Thr-345 by CDK1 and CDK2 promotes maintenance of H3K27me3 levels at EZH2-target loci, thus leading to epigenetic gene silencing. Sumoylated. Post-translationally, glycosylated: O-GlcNAcylation at Ser-75 by OGT increases stability of EZH2 and facilitates the formation of H3K27me3 by the PRC2/EED-EZH2 complex. Present in actively dividing cells. Widely expressed in early embryos. In later embryogenesis, expression restricted to central and peripheral nervous system, liver and thymus. In adult, highest expression in spleen, testis and placenta. Lower levels in intestine, muscle and ovary and very low levels in brain and liver. No expression in heart, thyroid gland, lung and kidney.

Its subcellular location is the nucleus. It is found in the chromosome. The catalysed reaction is L-lysyl(27)-[histone H3] + 3 S-adenosyl-L-methionine = N(6),N(6),N(6)-trimethyl-L-lysyl(27)-[histone H3] + 3 S-adenosyl-L-homocysteine + 3 H(+). Functionally, polycomb group (PcG) protein. Catalytic subunit of the PRC2/EED-EZH2 complex, which methylates (H3K9me) and 'Lys-27' (H3K27me) of histone H3, leading to transcriptional repression of the affected target gene. Able to mono-, di- and trimethylate 'Lys-27' of histone H3 to form H3K27me1, H3K27me2 and H3K27me3, respectively. Displays a preference for substrates with less methylation, loses activity when progressively more methyl groups are incorporated into H3K27, H3K27me0 &gt; H3K27me1 &gt; H3K27me2. Compared to EZH1-containing complexes, it is more abundant in embryonic stem cells and plays a major role in forming H3K27me3, which is required for embryonic stem cell identity and proper differentiation. The PRC2/EED-EZH2 complex may also serve as a recruiting platform for DNA methyltransferases, thereby linking two epigenetic repression systems. Genes repressed by the PRC2/EED-EZH2 complex include HOXA7, HOXB6 and HOXC8. EZH2 can also methylate non-histone proteins such as the transcription factor GATA4 and the nuclear receptor RORA. Regulates the circadian clock via histone methylation at the promoter of the circadian genes. Essential for the CRY1/2-mediated repression of the transcriptional activation of PER1/2 by the CLOCK-BMAL1 heterodimer; involved in the di and trimethylation of 'Lys-27' of histone H3 on PER1/2 promoters which is necessary for the CRY1/2 proteins to inhibit transcription. This chain is Histone-lysine N-methyltransferase EZH2, found in Mus musculus (Mouse).